A 325-amino-acid polypeptide reads, in one-letter code: G-protein coupled receptor E6 (325 aa).

The next 7 helical transmembrane spans lie at 45–65, 71–91, 106–126, 145–165, 198–218, 233–253, and 274–294; these read LFGT…MGFF, FTPS…LWLM, IVTE…NVGM, PAAI…VIAV, LVAK…GTAL, AICV…LTAM, and VFIY…MFTG.

This sequence belongs to the G-protein coupled receptor 1 family.

The protein resides in the host membrane. In Equus caballus (Horse), this protein is G-protein coupled receptor E6 (E6).